Consider the following 361-residue polypeptide: Adenosine kinase (361 aa).

The Nuclear localization signal motif lies at 7 to 15 (PKPKKLKVE). Residue Asp-34 coordinates adenosine. A Mg(2+)-binding site is contributed by Ser-48. Residue Tyr-76 is modified to Phosphotyrosine. Residue Asn-147 participates in Mg(2+) binding. Gln-305 serves as a coordination point for adenosine. The active site involves Asp-316. Asp-316 functions as the Proton acceptor in the catalytic mechanism.

This sequence belongs to the carbohydrate kinase PfkB family. Monomer. Requires Mg(2+) as cofactor. Widely expressed. Highly expressed in liver, testis, kidney and spleen (at protein level). In brain, expression in most forebrain structures and the cerebellum is higher than in the midbrain and brainstem (at protein level). In terms of tissue distribution, major isoform in testis and kidney. Not detected in most brain regions, except in the cerebellum, where it is expressed at a similar level to that of isoform 2 (at protein level). As to expression, major isoform in spleen and in most brain regions, except in the cerebellum, where it is expressed at a similar level to that of isoform 1 (at protein level).

Its subcellular location is the nucleus. The protein localises to the cytoplasm. The enzyme catalyses adenosine + ATP = AMP + ADP + H(+). Its pathway is purine metabolism; AMP biosynthesis via salvage pathway; AMP from adenosine: step 1/1. Its activity is regulated as follows. Activity is inhibited by 5-iodotubercidin and 5'-amino-5'-deoxyadenosine. Its function is as follows. Catalyzes the phosphorylation of the purine nucleoside adenosine at the 5' position in an ATP-dependent manner. Serves as a potential regulator of concentrations of extracellular adenosine and intracellular adenine nucleotides. The sequence is that of Adenosine kinase (Adk) from Mus musculus (Mouse).